A 583-amino-acid chain; its full sequence is Putative ABC transporter ATP-binding protein exp8 (583 aa).

Positions 25–308 constitute an ABC transmembrane type-1 domain; the sequence is TFLALSFLLA…VTQNFSTLQT (284 aa). 5 consecutive transmembrane segments (helical) span residues 26–46, 61–81, 135–155, 159–179, and 259–279; these read FLAL…PLVA, AVTV…VQYV, MFSG…TTLY, VLDF…FLLV, and LGYA…GITV. Residues 341–574 form the ABC transporter domain; sequence IRFEHVCFSY…GGTYHKMYSL (234 aa). 374-381 contacts ATP; the sequence is GHTGSGKS.

The protein belongs to the ABC transporter superfamily.

It is found in the cell membrane. The chain is Putative ABC transporter ATP-binding protein exp8 (exp8) from Streptococcus pneumoniae serotype 4 (strain ATCC BAA-334 / TIGR4).